The following is a 367-amino-acid chain: MGYTLPVFATAAAVAALRCLTEGACPQQVTLALLRPNRCETLPIAQGACLDAQQALAITYSEPSDALDLTRYTPIWAWVRWQDPVTAPKIQIEGGFGVGRDRATGKAAIYRYARLLLTTNLLLYCPKERAIAVTIVLPQGRDLAERTSNAAFGIVEGLSLLGTTGIAQPLTAPEQLDRYREDLAEKAAQSSTLVFCIGENGLQVAQQLQIPPSRCVKTANWLGPMLVAAAHYEVQQLLLLGYHGKLIKLAAGIFHTHHHLADARQEILTAFCALAGLDLEMLHQVWQAPTVEAALKFLERMVPHVLPEILSHIAHRIDQRATAYIHAHCAAPIGRSLQVGCALFGRDRQIVATSGAGNIILREISIR.

This sequence belongs to the CbiD family.

It carries out the reaction Co-precorrin-5B + S-adenosyl-L-methionine = Co-precorrin-6A + S-adenosyl-L-homocysteine. It functions in the pathway cofactor biosynthesis; adenosylcobalamin biosynthesis; cob(II)yrinate a,c-diamide from sirohydrochlorin (anaerobic route): step 6/10. Catalyzes the methylation of C-1 in cobalt-precorrin-5B to form cobalt-precorrin-6A. The chain is Cobalt-precorrin-5B C(1)-methyltransferase from Thermosynechococcus vestitus (strain NIES-2133 / IAM M-273 / BP-1).